A 411-amino-acid polypeptide reads, in one-letter code: MNALAATSRNFRQAARLLGLDSKLEKSLLIPFREIKVECTIPKDDGTLASFIGFRVQHDNARGPMKGGIRYHPEVDPDEVNALAQLMTWKTAVAAIPYGGAKGGIGCAPGELSTSELERLTRVFTQKIHDLIGAHTDVPAPDMGTNSQTMAWILDEYSKFHGHSPAVVTGKPIDLGGSLGRDAATGRGVMYATEALLAEHGKSISGSTFVIQGFGNVGSWAARIIHEKGGKVIALGDVTGSIRNKNGLDIPALMKHRNEGGALKDFHDAEVMDSSELLVHECDVLIPCALGGVLNRENAPDVKAKFIIEAANHPTDPEADEILAKKGVTILPDIYANSGGVIVSYFEWVQNIQGFMWDEEKVNMELHKYMNNSFQHIKAMCKSHDCNLRMGAFTLGVNRVARATLLRGWEA.

The transit peptide at 1 to 18 (MNALAATSRNFRQAARLL) directs the protein to the mitochondrion. Lys102 is a catalytic residue.

Belongs to the Glu/Leu/Phe/Val dehydrogenases family. As to expression, expressed in roots. Expressed ubiquitously in various tissues.

It localises to the mitochondrion. The catalysed reaction is L-glutamate + NAD(+) + H2O = 2-oxoglutarate + NH4(+) + NADH + H(+). The enzyme catalyses L-glutamate + NADP(+) + H2O = 2-oxoglutarate + NH4(+) + NADPH + H(+). The chain is Glutamate dehydrogenase 2, mitochondrial (GDH2) from Oryza sativa subsp. japonica (Rice).